A 249-amino-acid chain; its full sequence is Pyridoxine 5'-phosphate synthase (249 aa).

3-amino-2-oxopropyl phosphate is bound at residue asparagine 7. 9-10 contributes to the 1-deoxy-D-xylulose 5-phosphate binding site; that stretch reads DH. Residue arginine 18 coordinates 3-amino-2-oxopropyl phosphate. Histidine 43 functions as the Proton acceptor in the catalytic mechanism. 1-deoxy-D-xylulose 5-phosphate-binding residues include arginine 45 and histidine 50. The active-site Proton acceptor is glutamate 70. Threonine 100 provides a ligand contact to 1-deoxy-D-xylulose 5-phosphate. Residue histidine 198 is the Proton donor of the active site. 3-amino-2-oxopropyl phosphate-binding positions include alanine 199 and 220–221; that span reads GH.

This sequence belongs to the PNP synthase family. In terms of assembly, homooctamer; tetramer of dimers.

Its subcellular location is the cytoplasm. The enzyme catalyses 3-amino-2-oxopropyl phosphate + 1-deoxy-D-xylulose 5-phosphate = pyridoxine 5'-phosphate + phosphate + 2 H2O + H(+). The protein operates within cofactor biosynthesis; pyridoxine 5'-phosphate biosynthesis; pyridoxine 5'-phosphate from D-erythrose 4-phosphate: step 5/5. In terms of biological role, catalyzes the complicated ring closure reaction between the two acyclic compounds 1-deoxy-D-xylulose-5-phosphate (DXP) and 3-amino-2-oxopropyl phosphate (1-amino-acetone-3-phosphate or AAP) to form pyridoxine 5'-phosphate (PNP) and inorganic phosphate. The protein is Pyridoxine 5'-phosphate synthase of Azoarcus sp. (strain BH72).